The sequence spans 396 residues: Flavohemoprotein (396 aa).

Residues 1–136 form the Globin domain; it reads MLDNHTIAIV…LANVFIQRED (136 aa). H85 contacts heme b. Residues Y95 and E135 each act as charge relay system in the active site. Positions 147-396 are reductase; the sequence is GGWSGVRPFR…YECFGPHKVV (250 aa). Positions 150-255 constitute an FAD-binding FR-type domain; the sequence is SGVRPFRIVN…AAPHGDFFLD (106 aa). FAD-binding positions include Y188 and 204-207; that span reads RQYS. 268–273 contributes to the NADP(+) binding site; sequence GVGQTP. Residue 389 to 392 coordinates FAD; the sequence is CFGP.

Belongs to the globin family. Two-domain flavohemoproteins subfamily. The protein in the C-terminal section; belongs to the flavoprotein pyridine nucleotide cytochrome reductase family. The cofactor is heme b. FAD is required as a cofactor.

The catalysed reaction is 2 nitric oxide + NADPH + 2 O2 = 2 nitrate + NADP(+) + H(+). It carries out the reaction 2 nitric oxide + NADH + 2 O2 = 2 nitrate + NAD(+) + H(+). Its function is as follows. Is involved in NO detoxification in an aerobic process, termed nitric oxide dioxygenase (NOD) reaction that utilizes O(2) and NAD(P)H to convert NO to nitrate, which protects the bacterium from various noxious nitrogen compounds. Therefore, plays a central role in the inducible response to nitrosative stress. In Pectobacterium atrosepticum (strain SCRI 1043 / ATCC BAA-672) (Erwinia carotovora subsp. atroseptica), this protein is Flavohemoprotein.